A 290-amino-acid chain; its full sequence is Tegument protein VP22 (290 aa).

Over residues 98 to 112 the composition is skewed to polar residues; sequence STSHGRLSPTKTTPH. Residues 98–156 are disordered; that stretch reads STSHGRLSPTKTTPHPKSAGVTPPQRVPARPATRAAAPSATPTQPDCVAKQRTSPGVNS. Residues 118-142 show a composition bias toward low complexity; sequence VTPPQRVPARPATRAAAPSATPTQP. A Nuclear localization signal motif is present at residues 146 to 149; sequence AKQR. The Nuclear export signal motif lies at 219–231; the sequence is LDRFLKAAAIRIL.

It belongs to the alphaherpesvirinae VP22 tegument protein family. Interacts with gE (via C-terminus); this interaction is necessary for the recruitment of VP22 to the Golgi and its packaging into virions. Interacts with gM (via C-terminus). Interacts with VP16; this interaction allows the formation of a tripartite complex composed of VP16, VP22 and UL41/VHS. Interacts with the capsid-binding protein UL16. Interacts with host CGAS. In terms of processing, highly phosphorylated in the host cell. Packaging is selective for underphosphorylated forms.

The protein resides in the virion tegument. Its subcellular location is the host cytoplasm. It localises to the host nucleus. It is found in the host Golgi apparatus. Tegument protein that plays different roles during the time course of infection. Participates in both the accumulation of viral mRNAs and viral protein translation at late time of infection. Modulates the RNase activity of the virion host shutoff protein UL41 probably to ensure necessary levels of key cellular mRNAs and proteins. Plays a role in microtubule reorganization that occurs after viral infection by stabilizing microtubule network. Plays a role in the inhibition of host innate immune system by targeting the CGAS enzymatic activity which is the principal cytosolic DNA sensor that detects invading viral DNA. Acts by mediating disruption of liquid-like droplets in which CGAS is activated, thereby preventing CGAS activity. The chain is Tegument protein VP22 (11) from Equus caballus (Horse).